The following is a 591-amino-acid chain: Parathyroid hormone/parathyroid hormone-related peptide receptor (591 aa).

An N-terminal signal peptide occupies residues 1 to 26 (MGAARIAPSLALLLCCPVLSSAYALV). At 27–188 (DADDVFTKEE…REREVFDRLG (162 aa)) the chain is on the extracellular side. Disulfide bonds link cysteine 48–cysteine 117, cysteine 108–cysteine 148, and cysteine 131–cysteine 170. The segment at 67–104 (KGWTPASTSGKPRKEKASGKFYPESKENKDVPTGSRRR) is disordered. Basic and acidic residues predominate over residues 81 to 96 (EKASGKFYPESKENKD). 4 N-linked (GlcNAc...) asparagine glycosylation sites follow: asparagine 151, asparagine 161, asparagine 166, and asparagine 176. A helical transmembrane segment spans residues 189-212 (MIYTVGYSMSLASLTVAVLILAYF). At 213-219 (RRLHCTR) the chain is on the cytoplasmic side. The chain crosses the membrane as a helical span at residues 220–239 (NYIHMHMFLSFMLRAASIFV). At 240-282 (KDAVLYSGFTLDEAERLTEEELHIIAQVPPPPAAAAVGYAGCR) the chain is on the extracellular side. The helical transmembrane segment at 283-306 (VAVTFFLYFLATNYYWILVEGLYL) threads the bilayer. Over 307–320 (HSLIFMAFFSEKKY) the chain is Cytoplasmic. Residues 321–342 (LWGFTIFGWGLPAVFVAVWVGV) form a helical membrane-spanning segment. The Extracellular portion of the chain corresponds to 343–361 (RATLANTGCWDLSSGHKKW). Residues 362–382 (IIQVPILASVVLNFILFINII) traverse the membrane as a helical segment. Topologically, residues 383-409 (RVLATKLRETNAGRCDTRQQYRKLLRS) are cytoplasmic. Residues 410-428 (TLVLVPLFGVHYTVFMALP) traverse the membrane as a helical segment. The Extracellular segment spans residues 429-440 (YTEVSGTLWQIQ). Residues 441-463 (MHYEMLFNSFQGFFVAIIYCFCN) traverse the membrane as a helical segment. Residues 464–591 (GEVQAEIRKS…LLQEEWETVM (128 aa)) are Cytoplasmic-facing. Positions 474 to 477 (WSRW) match the Important for interaction with G proteins motif. The disordered stretch occupies residues 516–544 (LPLSPRLPPATTNGHSQLPGHAKPGAPAT).

This sequence belongs to the G-protein coupled receptor 2 family. In terms of assembly, homodimer in the absence of bound ligand. Peptide hormone binding leads to dissociation of the homodimer. Post-translationally, N-glycosylated.

It is found in the cell membrane. In terms of biological role, G-protein-coupled receptor for parathyroid hormone (PTH) and for parathyroid hormone-related peptide (PTHLH). Ligand binding causes a conformation change that triggers signaling via guanine nucleotide-binding proteins (G proteins) and modulates the activity of downstream effectors, such as adenylate cyclase (cAMP). PTH1R is coupled to G(s) G alpha proteins and mediates activation of adenylate cyclase activity. PTHLH dissociates from PTH1R more rapidly than PTH; as consequence, the cAMP response induced by PTHLH decays faster than the response induced by PTH. In Rattus norvegicus (Rat), this protein is Parathyroid hormone/parathyroid hormone-related peptide receptor (Pth1r).